The sequence spans 859 residues: Collagen alpha-1(II) chain (859 aa).

Residues Leu1–Pro607 are disordered. 4-hydroxyproline is present on residues Pro31 and Pro40. Pro42 carries the post-translational modification 3-hydroxyproline. 4-hydroxyproline occurs at positions 43 and 46. Residues Glu78–Gln121 are compositionally biased toward low complexity. Positions Lys136–Pro147 are enriched in basic and acidic residues. Composition is skewed to low complexity over residues Pro204 to Lys220 and Pro249 to Val277. Position 279 is a 3-hydroxyproline (Pro279). The span at Pro279–Pro292 shows a compositional bias: pro residues. 4-hydroxyproline is present on residues Pro280, Pro286, and Pro292. Residues Asp306 to Pro321 show a composition bias toward low complexity. Positions Arg487–Leu501 are enriched in basic and acidic residues. The interval Gly491–Pro586 is triple-helical region. Residue Pro516 is modified to 3-hydroxyproline. The segment covering Ser520–Ala529 has biased composition (low complexity). Position 553 is a 4-hydroxyproline (Pro553). The residue at position 558 (Pro558) is a 3-hydroxyproline. Position 559 is a 4-hydroxyproline (Pro559). Positions Pro570–Pro586 are enriched in pro residues. Residue Pro573 is modified to 3-hydroxyproline. A 4-hydroxyproline mark is found at Pro574 and Pro577. Residue Pro579 is modified to 3-hydroxyproline. Residues Pro580 and Pro583 each carry the 4-hydroxyproline modification. Pro585 bears the 3-hydroxyproline mark. At Pro586 the chain carries 4-hydroxyproline. Residues Gly587–Ala613 form a nonhelical region (C-terminal) region. Positions Asp614–Leu859 are cleaved as a propeptide — C-terminal propeptide. The Fibrillar collagen NC1 domain maps to Val625 to Leu859. 3 disulfides stabilise this stretch: Cys655-Cys687, Cys695-Cys857, and Cys765-Cys810. Ca(2+) is bound by residues Asp673, Asn675, Gln676, Cys678, and Asp681. A glycan (N-linked (GlcNAc...) asparagine) is linked at Asn760.

Belongs to the fibrillar collagen family. Homotrimers of alpha 1(II) chains. In terms of processing, contains mostly 4-hydroxyproline. Prolines at the third position of the tripeptide repeating unit (G-X-P) are 4-hydroxylated in some or all of the chains. Post-translationally, contains 3-hydroxyproline at a few sites. This modification occurs on the first proline residue in the sequence motif Gly-Pro-Hyp, where Hyp is 4-hydroxyproline. Lysine residues at the third position of the tripeptide repeating unit (G-X-Y) are 5-hydroxylated in some or all of the chains. In terms of processing, O-glycosylated on hydroxylated lysine residues. The O-linked glycan consists of a Glc-Gal disaccharide.

It is found in the secreted. Its subcellular location is the extracellular space. The protein localises to the extracellular matrix. Its function is as follows. Type II collagen is specific for cartilaginous tissues. It is essential for the normal embryonic development of the skeleton, for linear growth and for the ability of cartilage to resist compressive forces. The chain is Collagen alpha-1(II) chain from Gallus gallus (Chicken).